A 168-amino-acid polypeptide reads, in one-letter code: MNLRLELTRFLNLCFALASAFMFWKGLSIVTNSHSPIVVVLSGSMEPAFQRGDILFLWNRNELNKVGDVVVYEVDNKEIPIVHRVLREHVDETSGKQLLLTKGDNNAGNDIPLYAKRKIYLHKEKDIVGTVKGYIPQLGYITIWISENKYAKMGLMGLIALSALLSNE.

Topologically, residues M1–N12 are cytoplasmic. Residues L13–V30 form a helical; Signal-anchor for type II membrane protein membrane-spanning segment. The Lumenal portion of the chain corresponds to T31–E168. Active-site charge relay system residues include S44, H83, and D110. The interval G154–L165 is C-terminal short (CTS) helix.

This sequence belongs to the peptidase S26B family. In terms of assembly, component of the signal peptidase complex (SPC) composed of a catalytic subunit SEC11 and three accessory subunits SPC1, SPC2 and SPC3. The complex induces a local thinning of the ER membrane which is used to measure the length of the signal peptide (SP) h-region of protein substrates. This ensures the selectivity of the complex towards h-regions shorter than 18-20 amino acids. SPC associates with the translocon complex.

It is found in the endoplasmic reticulum membrane. The enzyme catalyses Cleavage of hydrophobic, N-terminal signal or leader sequences from secreted and periplasmic proteins.. Functionally, catalytic component of the signal peptidase complex (SPC) which catalyzes the cleavage of N-terminal signal sequences from nascent proteins as they are translocated into the lumen of the endoplasmic reticulum. Specifically cleaves N-terminal signal peptides that contain a hydrophobic alpha-helix (h-region) shorter than 18-20 amino acids. The chain is Signal peptidase complex catalytic subunit SEC11 (SEC11) from Lachancea thermotolerans (strain ATCC 56472 / CBS 6340 / NRRL Y-8284) (Yeast).